We begin with the raw amino-acid sequence, 401 residues long: G2/mitotic-specific cyclin-B1 (401 aa).

2 disordered regions span residues 1–30 (MALR…PTLK) and 84–103 (KVQV…ETSG). Residues 9–26 (RLASTRAEQGGKTCSVSG) show a composition bias toward polar residues.

Belongs to the cyclin family. Cyclin AB subfamily. As to quaternary structure, interacts with the CDK1 protein kinase to form a serine/threonine kinase holoenzyme complex also known as maturation promoting factor (MPF). The cyclin subunit imparts substrate specificity to the complex.

Essential for the control of the cell cycle at the G2/M (mitosis) transition. The chain is G2/mitotic-specific cyclin-B1 (ccnb1) from Oryzias javanicus (Javanese ricefish).